A 341-amino-acid chain; its full sequence is tRNA N6-adenosine threonylcarbamoyltransferase (341 aa).

Fe cation-binding residues include His-115 and His-119. Residues 137-141, Asp-170, Gly-183, Asp-187, and Asn-276 each bind substrate; that span reads AVSGG. Asp-306 is a Fe cation binding site.

This sequence belongs to the KAE1 / TsaD family. Requires Fe(2+) as cofactor.

Its subcellular location is the cytoplasm. It catalyses the reaction L-threonylcarbamoyladenylate + adenosine(37) in tRNA = N(6)-L-threonylcarbamoyladenosine(37) in tRNA + AMP + H(+). In terms of biological role, required for the formation of a threonylcarbamoyl group on adenosine at position 37 (t(6)A37) in tRNAs that read codons beginning with adenine. Is involved in the transfer of the threonylcarbamoyl moiety of threonylcarbamoyl-AMP (TC-AMP) to the N6 group of A37, together with TsaE and TsaB. TsaD likely plays a direct catalytic role in this reaction. This Lacticaseibacillus casei (strain BL23) (Lactobacillus casei) protein is tRNA N6-adenosine threonylcarbamoyltransferase.